Consider the following 306-residue polypeptide: Ribonuclease BN (306 aa).

Residues His64, His66, Asp68, His69, His141, Asp212, and His270 each contribute to the Zn(2+) site. Residue Asp68 is the Proton acceptor of the active site.

Belongs to the RNase Z family. RNase BN subfamily. Homodimer. Zn(2+) serves as cofactor.

Its function is as follows. Zinc phosphodiesterase, which has both exoribonuclease and endoribonuclease activities. The polypeptide is Ribonuclease BN (Klebsiella pneumoniae subsp. pneumoniae (strain ATCC 700721 / MGH 78578)).